Consider the following 164-residue polypeptide: Endoribonuclease YbeY (164 aa).

Residues His120, His124, and His130 each contribute to the Zn(2+) site.

This sequence belongs to the endoribonuclease YbeY family. The cofactor is Zn(2+).

The protein resides in the cytoplasm. Functionally, single strand-specific metallo-endoribonuclease involved in late-stage 70S ribosome quality control and in maturation of the 3' terminus of the 16S rRNA. The protein is Endoribonuclease YbeY of Acidothermus cellulolyticus (strain ATCC 43068 / DSM 8971 / 11B).